The chain runs to 118 residues: Large ribosomal subunit protein bL20 (118 aa).

This sequence belongs to the bacterial ribosomal protein bL20 family.

In terms of biological role, binds directly to 23S ribosomal RNA and is necessary for the in vitro assembly process of the 50S ribosomal subunit. It is not involved in the protein synthesizing functions of that subunit. The sequence is that of Large ribosomal subunit protein bL20 from Proteus mirabilis (strain HI4320).